Here is a 522-residue protein sequence, read N- to C-terminus: Cytochrome bd-I ubiquinol oxidase subunit 1 (522 aa).

N-formylmethionine is present on methionine 1. At 1–22 the chain is on the cytoplasmic side; the sequence is MLDIVELSRLQFALTAMYHFLF. Residue histidine 19 coordinates heme b. The chain crosses the membrane as a helical span at residues 23 to 42; it reads VPLTLGMAFLLAIMETVYVL. Residues 43 to 94 are Periplasmic-facing; sequence SGKQIYKDMTKFWGKLFGINFALGVATGLTMEFQFGTNWSYYSHYVGDIFGA. A helical membrane pass occupies residues 95–114; sequence PLAIEGLMAFFLESTFVGLF. Residues 115–129 lie on the Cytoplasmic side of the membrane; that stretch reads FFGWDRLGKVQHMCV. The helical transmembrane segment at 130–149 threads the bilayer; it reads TWLVALGSNLSALWILVANG. Over 150-187 the chain is Periplasmic; that stretch reads WMQNPIASDFNFETMRMEMVSFSELVLNPVAQVKFVHT. Residue histidine 186 participates in heme b binding. Residues 188–207 traverse the membrane as a helical segment; it reads VASGYVTGAMFILGISAWYM. Topologically, residues 208-219 are cytoplasmic; the sequence is LKGRDFAFAKRS. Residues 220 to 239 traverse the membrane as a helical segment; the sequence is FAIAASFGMAAVLSVIVLGD. Topologically, residues 240–392 are periplasmic; that stretch reads ESGYEMGDVQ…VAPLYFAFRI (153 aa). Methionine 393 provides a ligand contact to heme b. The helical transmembrane segment at 393–412 threads the bilayer; sequence MVACGFLLLAIIALSFWSVI. Topologically, residues 413–470 are cytoplasmic; sequence RNRIGEKKWLLRAALYGIPLPWIAVEAGWFVAEYGRQPWAIGEVLPTAVANSSLTAGD. Residues 471-490 traverse the membrane as a helical segment; the sequence is LIFSMVLICGLYTLFLVAEL. The Periplasmic segment spans residues 491 to 522; the sequence is FLMFKFARLGPSSLKTGRYHFEQSSTTTQPAR.

Belongs to the cytochrome ubiquinol oxidase subunit 1 family. In terms of assembly, heterodimer of subunits I and II. Heme b is required as a cofactor. Heme d cis-diol serves as cofactor.

It is found in the cell inner membrane. It catalyses the reaction 2 a ubiquinol + O2(in) + 4 H(+)(in) = 2 a ubiquinone + 2 H2O(in) + 4 H(+)(out). It functions in the pathway energy metabolism; oxidative phosphorylation. Functionally, a terminal oxidase that produces a proton motive force by the vectorial transfer of protons across the inner membrane. It is the component of the aerobic respiratory chain of E.coli that predominates when cells are grown at low aeration. Generates a proton motive force using protons and electrons from opposite sides of the membrane to generate H(2)O, transferring 1 proton/electron. In Escherichia coli O6:H1 (strain CFT073 / ATCC 700928 / UPEC), this protein is Cytochrome bd-I ubiquinol oxidase subunit 1 (cydA).